The primary structure comprises 566 residues: Membrane protein insertase YidC (566 aa).

Residues 6–26 (NLLLLALLFVSFLLYTAWVEE) traverse the membrane as a helical segment. Residues 30–80 (QVAPQVQTEQVDSSVPASVASSANSANLSDGVPNSPQQSSTDATSTELPAS) form a disordered region. Residues 31–41 (VAPQVQTEQVD) show a composition bias toward polar residues. The span at 42–58 (SSVPASVASSANSANLS) shows a compositional bias: low complexity. Positions 61 to 80 (VPNSPQQSSTDATSTELPAS) are enriched in polar residues. 4 consecutive transmembrane segments (helical) span residues 356-376 (LLLFFQGIVGNWGVAIILITF), 433-453 (LGGCFPILLQMPIFIALYWSL), 471-491 (LSVQDPYYILPILMGVSMFFI), and 510-530 (FMPVIFTFFFLWFPAGLVLYW).

This sequence belongs to the OXA1/ALB3/YidC family. Type 1 subfamily. As to quaternary structure, interacts with the Sec translocase complex via SecD. Specifically interacts with transmembrane segments of nascent integral membrane proteins during membrane integration.

The protein resides in the cell inner membrane. In terms of biological role, required for the insertion and/or proper folding and/or complex formation of integral membrane proteins into the membrane. Involved in integration of membrane proteins that insert both dependently and independently of the Sec translocase complex, as well as at least some lipoproteins. Aids folding of multispanning membrane proteins. This Psychromonas ingrahamii (strain DSM 17664 / CCUG 51855 / 37) protein is Membrane protein insertase YidC.